Reading from the N-terminus, the 506-residue chain is Nucleosome assembly protein 1-like 3 (506 aa).

Disordered regions lie at residues 1–95 (MAEA…LGTN) and 157–307 (PTEE…KRED). Low complexity predominate over residues 35–70 (SSSSSSSTSDSSSSSSTSGSSSGSGSSSSSSGSTSS). Positions 157–178 (PTEEECEWNSEDEEFSSDEEVQ) are enriched in acidic residues. Basic and acidic residues predominate over residues 196-296 (PKENPEVKAE…ERLQDSVDLK (101 aa)).

This sequence belongs to the nucleosome assembly protein (NAP) family.

The protein localises to the nucleus. The sequence is that of Nucleosome assembly protein 1-like 3 (NAP1L3) from Homo sapiens (Human).